Reading from the N-terminus, the 716-residue chain is Radial spoke head protein 4 homolog A (716 aa).

Disordered regions lie at residues 1–164 (MEDS…CGRR), 375–410 (EGED…PKSF), 506–526 (GEEE…FEEN), and 697–716 (LLAA…DDYD). Positions 8-25 (KQEKENQEELGETRRPWE) are enriched in basic and acidic residues. 3 stretches are compositionally biased toward low complexity: residues 29–42 (AASP…SSEP), 54–66 (QSRS…PQSR), and 80–100 (SSPA…LAPA). A compositionally biased stretch (polar residues) spans 140–156 (HHTSQSEGNTFQQSQQP). The segment covering 375–389 (EGEDEEEVEEEDVAE) has biased composition (acidic residues). Ser396 is modified (phosphoserine). 2 stretches are compositionally biased toward acidic residues: residues 506–516 (GEEEGEEEEEA) and 701–716 (ENEE…DDYD).

This sequence belongs to the flagellar radial spoke RSP4/6 family. As to quaternary structure, interacts with RSPH6A. As to expression, expressed in trachea, lungs, and testes. Very strong expression is detected in nasal brushings.

Its subcellular location is the cytoplasm. It localises to the cytoskeleton. The protein resides in the cilium axoneme. The protein localises to the cell projection. It is found in the cilium. Functionally, component of the axonemal radial spoke head which plays an important role in ciliary motility. Essential for triplet radial spokes (RS1, RS2 and RS3) head assembly in the motile cilia. This chain is Radial spoke head protein 4 homolog A (RSPH4A), found in Homo sapiens (Human).